The sequence spans 778 residues: Ribonucleoside-diphosphate reductase large subunit (778 aa).

Substrate is bound by residues serine 177, 192–193 (SC), glycine 221, 419–423 (NLCIE), and 613–617 (PTATS). Cysteines 193 and 439 form a disulfide. Residue asparagine 419 is the Proton acceptor of the active site. Cysteine 421 functions as the Cysteine radical intermediate in the catalytic mechanism. Glutamate 423 serves as the catalytic Proton acceptor.

The protein belongs to the ribonucleoside diphosphate reductase large chain family. As to quaternary structure, heterotetramer composed of a homodimer of the large subunit (R1) and a homodimer of the small subunit (R2). Larger multisubunit protein complex are also active, composed of (R1)n(R2)n.

It catalyses the reaction a 2'-deoxyribonucleoside 5'-diphosphate + [thioredoxin]-disulfide + H2O = a ribonucleoside 5'-diphosphate + [thioredoxin]-dithiol. With respect to regulation, under complex allosteric control mediated by deoxynucleoside triphosphates and ATP binding. The type of nucleotide bound at the specificity site determines substrate preference. It seems probable that ATP makes the enzyme reduce CDP and UDP, dGTP favors ADP reduction and dTTP favors GDP reduction. Ribonucleoside-diphosphate reductase holoenzyme provides the precursors necessary for viral DNA synthesis. Allows virus growth in non-dividing cells. Catalyzes the biosynthesis of deoxyribonucleotides from the corresponding ribonucleotides. The protein is Ribonucleoside-diphosphate reductase large subunit of African swine fever virus (isolate Tick/South Africa/Pretoriuskop Pr4/1996) (ASFV).